Here is a 322-residue protein sequence, read N- to C-terminus: TATA box-binding protein-associated factor RNA polymerase I subunit D (322 aa).

2 disordered regions span residues 1–70 (MAQS…SIEP) and 82–116 (FKKK…RITR). Residue serine 23 is modified to Phosphoserine. A compositionally biased stretch (basic residues) spans 82-107 (FKKKKRKKRKKRKYEPKLRPRGRPRG). Serine 137 is subject to Phosphoserine. Residues 198–219 (YMDDDGSLSPIEEPLTEDEATN) are disordered. Serine 232 carries the post-translational modification Phosphoserine. The segment covering 257–267 (FSKKAKDATHR) has biased composition (basic and acidic residues). Residues 257–276 (FSKKAKDATHREKGHRRTLK) form a disordered region.

In terms of assembly, component of the transcription factor SL1/TIF-IB complex, composed of TBP and at least TAF1A, TAF1B, TAF1C and TAF1D. Interacts with UBTF.

It localises to the nucleus. Functionally, component of the transcription factor SL1/TIF-IB complex, which is involved in the assembly of the PIC (preinitiation complex) during RNA polymerase I-dependent transcription. The rate of PIC formation probably is primarily dependent on the rate of association of SL1/TIF-IB with the rDNA promoter. SL1/TIF-IB is involved in stabilization of nucleolar transcription factor 1/UBTF on rDNA. Formation of SL1/TIF-IB excludes the association of TBP with TFIID subunits. In Mus musculus (Mouse), this protein is TATA box-binding protein-associated factor RNA polymerase I subunit D (Taf1d).